A 428-amino-acid chain; its full sequence is GTPase Obg (428 aa).

The Obg domain occupies Met-1–Leu-158. In terms of domain architecture, OBG-type G spans Ala-159–Lys-331. GTP contacts are provided by residues Gly-165 to Ser-172, Phe-190 to Lys-194, Asp-212 to Gly-215, Asn-282 to Asp-285, and Ser-312 to Ala-314. 2 residues coordinate Mg(2+): Ser-172 and Thr-192. Residues Met-345–Leu-428 enclose the OCT domain.

Belongs to the TRAFAC class OBG-HflX-like GTPase superfamily. OBG GTPase family. As to quaternary structure, monomer. Requires Mg(2+) as cofactor.

Its subcellular location is the cytoplasm. In terms of biological role, an essential GTPase which binds GTP, GDP and possibly (p)ppGpp with moderate affinity, with high nucleotide exchange rates and a fairly low GTP hydrolysis rate. Plays a role in control of the cell cycle, stress response, ribosome biogenesis and in those bacteria that undergo differentiation, in morphogenesis control. This is GTPase Obg from Clostridium botulinum (strain Eklund 17B / Type B).